The primary structure comprises 142 residues: Nucleoside diphosphate kinase (142 aa).

ATP is bound by residues K11, F59, R87, T93, R104, and N114. H117 functions as the Pros-phosphohistidine intermediate in the catalytic mechanism.

The protein belongs to the NDK family. Homotetramer. Mg(2+) is required as a cofactor.

The protein localises to the cytoplasm. It carries out the reaction a 2'-deoxyribonucleoside 5'-diphosphate + ATP = a 2'-deoxyribonucleoside 5'-triphosphate + ADP. The catalysed reaction is a ribonucleoside 5'-diphosphate + ATP = a ribonucleoside 5'-triphosphate + ADP. Major role in the synthesis of nucleoside triphosphates other than ATP. The ATP gamma phosphate is transferred to the NDP beta phosphate via a ping-pong mechanism, using a phosphorylated active-site intermediate. The chain is Nucleoside diphosphate kinase from Dechloromonas aromatica (strain RCB).